We begin with the raw amino-acid sequence, 543 residues long: Membrane protein insertase YidC (543 aa).

A helical transmembrane segment spans residues 7–27; sequence FLLIGLAMVSFLLWQQWQVDY. Residues 30-61 are disordered; that stretch reads QPAQPVESQQTTGSDAPNSNGDVPIATPTNKS. Residues 35–61 are compositionally biased toward polar residues; sequence VESQQTTGSDAPNSNGDVPIATPTNKS. Helical transmembrane passes span 341 to 361, 421 to 441, 451 to 471, and 499 to 519; these read FAFL…IILI, GGCF…WVLL, FIFW…PILT, and PVAM…YWLI.

Belongs to the OXA1/ALB3/YidC family. Type 1 subfamily. Interacts with the Sec translocase complex via SecD. Specifically interacts with transmembrane segments of nascent integral membrane proteins during membrane integration.

Its subcellular location is the cell inner membrane. In terms of biological role, required for the insertion and/or proper folding and/or complex formation of integral membrane proteins into the membrane. Involved in integration of membrane proteins that insert both dependently and independently of the Sec translocase complex, as well as at least some lipoproteins. Aids folding of multispanning membrane proteins. This chain is Membrane protein insertase YidC, found in Pseudoalteromonas atlantica (strain T6c / ATCC BAA-1087).